We begin with the raw amino-acid sequence, 1410 residues long: DNA-directed RNA polymerase subunit beta' (1410 aa).

Zn(2+)-binding residues include Cys69, Cys71, Cys84, and Cys87. Asp461, Asp463, and Asp465 together coordinate Mg(2+). Zn(2+) contacts are provided by Cys810, Cys884, Cys891, and Cys894.

The protein belongs to the RNA polymerase beta' chain family. In terms of assembly, the RNAP catalytic core consists of 2 alpha, 1 beta, 1 beta' and 1 omega subunit. When a sigma factor is associated with the core the holoenzyme is formed, which can initiate transcription. Mg(2+) is required as a cofactor. The cofactor is Zn(2+).

The enzyme catalyses RNA(n) + a ribonucleoside 5'-triphosphate = RNA(n+1) + diphosphate. In terms of biological role, DNA-dependent RNA polymerase catalyzes the transcription of DNA into RNA using the four ribonucleoside triphosphates as substrates. This chain is DNA-directed RNA polymerase subunit beta', found in Ehrlichia chaffeensis (strain ATCC CRL-10679 / Arkansas).